We begin with the raw amino-acid sequence, 175 residues long: Alpha-crystallin B chain (175 aa).

Position 1 is an N-acetylmethionine (M1). S19 is subject to Phosphoserine. O-linked (GlcNAc) serine glycosylation occurs at S41. Residues S45 and S59 each carry the phosphoserine modification. One can recognise a sHSP domain in the interval 56–164; that stretch reads RAPSWIDTGL…PERTIPITRE (109 aa). H83 contacts Zn(2+). K92 bears the N6-acetyllysine mark. Zn(2+) is bound by residues H104, E106, H111, and H119. The interval 142-175 is disordered; the sequence is VLTVNGPRKQASGPERTIPITREEKPAVTAAPKK. N6-acetyllysine is present on K166. Residue T170 is glycosylated (O-linked (GlcNAc) threonine).

This sequence belongs to the small heat shock protein (HSP20) family. Heteromer composed of three CRYAA and one CRYAB subunits. Aggregates with homologous proteins, including the small heat shock protein HSPB1, to form large heteromeric complexes. Inter-subunit bridging via zinc ions enhances stability, which is crucial as there is no protein turn over in the lens. Interacts with HSPBAP1 and TTN/titin. Interacts with TMEM109; in the cellular response to DNA damage. Interacts with DES; binds rapidly during early stages of DES filament assembly and a reduced binding seen in the later stages. Interacts with ATP6V1A and with MTOR, forming a ternary complex. In terms of tissue distribution, lens as well as other tissues.

The protein localises to the cytoplasm. Its subcellular location is the nucleus. It localises to the secreted. It is found in the lysosome. Its function is as follows. May contribute to the transparency and refractive index of the lens. Has chaperone-like activity, preventing aggregation of various proteins under a wide range of stress conditions. In lens epithelial cells, stabilizes the ATP6V1A protein, preventing its degradation by the proteasome. The sequence is that of Alpha-crystallin B chain (CRYAB) from Spalax judaei (Judean Mountains blind mole rat).